The following is a 425-amino-acid chain: Phosphomethylpyrimidine synthase (425 aa).

Substrate-binding positions include N66, M95, Y124, H159, S181–G183, D222–R225, and E261. Position 265 (H265) interacts with Zn(2+). Y288 contributes to the substrate binding site. A Zn(2+)-binding site is contributed by H329. C406, C409, and C413 together coordinate [4Fe-4S] cluster.

This sequence belongs to the ThiC family. Requires [4Fe-4S] cluster as cofactor.

It carries out the reaction 5-amino-1-(5-phospho-beta-D-ribosyl)imidazole + S-adenosyl-L-methionine = 4-amino-2-methyl-5-(phosphooxymethyl)pyrimidine + CO + 5'-deoxyadenosine + formate + L-methionine + 3 H(+). The protein operates within cofactor biosynthesis; thiamine diphosphate biosynthesis. In terms of biological role, catalyzes the synthesis of the hydroxymethylpyrimidine phosphate (HMP-P) moiety of thiamine from aminoimidazole ribotide (AIR) in a radical S-adenosyl-L-methionine (SAM)-dependent reaction. The protein is Phosphomethylpyrimidine synthase of Archaeoglobus fulgidus (strain ATCC 49558 / DSM 4304 / JCM 9628 / NBRC 100126 / VC-16).